The sequence spans 78 residues: Serine rich endogenous peptide 19 (78 aa).

An N-terminal signal peptide occupies residues 1 to 25; it reads MCNIVVFLLTLTLFLFSGLSNTAFA. An SCOOP motif motif is present at residues 50 to 64; it reads KIEVDGSCSRRAPGR. Residues 56-58 carry the SxS motif essential for MIK2 binding motif; that stretch reads SCS. The disordered stretch occupies residues 57 to 78; that stretch reads CSRRAPGRRRPPNRPPKPCTKP. A compositionally biased stretch (pro residues) spans 69–78; that stretch reads NRPPKPCTKP.

It belongs to the serine rich endogenous peptide (SCOOP) phytocytokine family. In terms of assembly, interacts with MIK2 (via extracellular leucine-rich repeat domain); this interaction triggers the formation of complex between MIK2 and the BAK1/SERK3 and SERK4 coreceptors, and subsequent BAK1 activation by phosphorylation.

The protein resides in the cell membrane. The protein localises to the secreted. Its subcellular location is the extracellular space. It is found in the apoplast. Its function is as follows. Brassicaceae-specific phytocytokine (plant endogenous peptide released into the apoplast) perceived by MIK2 in a BAK1/SERK3 and SERK4 coreceptors-dependent manner, that modulates various physiological and antimicrobial processes including growth prevention and reactive oxygen species (ROS) response regulation. This chain is Serine rich endogenous peptide 19, found in Arabidopsis thaliana (Mouse-ear cress).